A 98-amino-acid polypeptide reads, in one-letter code: Keratin-associated protein 3-1 (98 aa).

N-acetylalanine is present on Ala2. 4 tandem repeats follow at residues 3 to 7 (CCAPR), 8 to 12 (CCSVR), 47 to 51 (FCDNS), and 55 to 59 (YHVPD). Positions 3 to 59 (CCAPRCCSVRTGPATTICSSDQFCRCGVCLPSTCPHDISLLQPTFCDNSPVPYHVPD) are 4 X 5 AA repeats of C-C-X(3).

Belongs to the KRTAP type 3 family. As to quaternary structure, interacts with wool keratins. Wool.

In the wool cortex, wool keratin intermediate filaments are embedded in an interfilamentous matrix, consisting of hair keratin-associated proteins (KRTAP), which are essential for the formation of a rigid and resistant wool shaft through their extensive disulfide bond cross-linking with abundant cysteine residues of wool keratins. The matrix proteins include the high-sulfur and high-glycine-tyrosine keratins. This Capra hircus (Goat) protein is Keratin-associated protein 3-1 (KRTAP3-1).